The primary structure comprises 451 residues: Signal recognition particle 54 kDa protein (451 aa).

Residues 105 to 112 (GVQGTGKT), 187 to 191 (DTAGR), and 247 to 250 (TKMD) contribute to the GTP site.

The protein belongs to the GTP-binding SRP family. SRP54 subfamily. In terms of assembly, part of the signal recognition particle protein translocation system, which is composed of SRP and FtsY. Archaeal SRP consists of a 7S RNA molecule of 300 nucleotides and two protein subunits: SRP54 and SRP19.

The protein resides in the cytoplasm. It carries out the reaction GTP + H2O = GDP + phosphate + H(+). Its function is as follows. Involved in targeting and insertion of nascent membrane proteins into the cytoplasmic membrane. Binds to the hydrophobic signal sequence of the ribosome-nascent chain (RNC) as it emerges from the ribosomes. The SRP-RNC complex is then targeted to the cytoplasmic membrane where it interacts with the SRP receptor FtsY. The sequence is that of Signal recognition particle 54 kDa protein from Acidianus ambivalens (Desulfurolobus ambivalens).